We begin with the raw amino-acid sequence, 265 residues long: 6-oxopurine nucleoside phosphorylase (265 aa).

Phosphate is bound by residues Ser10, 49–50, and 82–83; these read RH and SA. Disulfide bonds link Cys136–Cys202 and Cys162–Cys190. A substrate-binding site is contributed by Met187. Thr188 provides a ligand contact to phosphate. 211–213 provides a ligand contact to substrate; that stretch reads NYA. Residues Cys254 and Cys256 are joined by a disulfide bond.

It belongs to the PNP/MTAP phosphorylase family. MTAP subfamily. Homohexamer. Dimer of a homotrimer.

The enzyme catalyses a purine D-ribonucleoside + phosphate = a purine nucleobase + alpha-D-ribose 1-phosphate. The catalysed reaction is guanosine + phosphate = alpha-D-ribose 1-phosphate + guanine. It catalyses the reaction inosine + phosphate = alpha-D-ribose 1-phosphate + hypoxanthine. It participates in purine metabolism; purine nucleoside salvage. Functionally, purine nucleoside phosphorylase which is highly specific for 6-oxopurine nucleosides. Cleaves guanosine or inosine to respective bases and sugar-1-phosphate molecules. Involved in purine salvage. This chain is 6-oxopurine nucleoside phosphorylase, found in Pyrococcus furiosus (strain ATCC 43587 / DSM 3638 / JCM 8422 / Vc1).